The primary structure comprises 425 residues: O-methyltransferase AMT9 (425 aa).

Residues 257–258 (GG), D280, 306–307 (DF), R322, and R323 each bind S-adenosyl-L-methionine. The active-site Proton acceptor is the H326.

Belongs to the class I-like SAM-binding methyltransferase superfamily. Cation-independent O-methyltransferase family.

It functions in the pathway mycotoxin biosynthesis. In terms of biological role, O-methyltransferase; part of the gene clusters that mediate the biosynthesis of AM-toxins, host-selective toxins (HSTs) causing Alternaria blotch on apple, a worldwide distributed disease. AM-toxins are cyclic depsipeptides containing the 3 residues 2-hydroxy-isovaleric acid (2-HIV), dehydroalanine, L-alanine which are common for all 3 AM-toxins I to III. The fourth precursor is L-alpha-amino-methoxyphenyl-valeric acid (L-Amv) for AM-toxin I, L-alpha-amino-phenyl-valeric acid (L-Apv) for AM-toxin II, and L-alpha-amino-hydroxyphenyl-valeric acid (L-Ahv) for AM-toxin III. AM-toxins have two target sites for affecting susceptible apple cells; they cause invagination of the plasma membrane and electrolyte loss and chloroplast disorganization. The non-ribosomal peptide synthetase AMT1 contains 4 catalytic modules and is responsible for activation of each residue in AM-toxin. The aldo-keto reductase AMT2 catalyzes the conversion of 2-keto-isovaleric acid (2-KIV) to 2-hydroxy-isovaleric acid (2-HIV), one of the precursor residues incorporated by AMT1 during AM-toxin biosynthesis, by reduction of its ketone to an alcohol. The cytochrome P450 monooxygenase AMT3 and the thioesterase AMT4 are also important for AM-toxin production, but their exact function within the AM-toxin biosynthesis are not known yet. Up to 21 proteins (including AMT1 to AMT4) are predicted to be involved in AM-toxin biosynthesis since their expression ishighly up-regulated in AM-toxin-producing cultures. The chain is O-methyltransferase AMT9 from Alternaria alternata (Alternaria rot fungus).